Consider the following 310-residue polypeptide: GPN-loop GTPase 2 (310 aa).

Alanine 2 carries the N-acetylalanine modification. A GTP-binding site is contributed by 19–24 (GSGKTT). Residues 76-78 (GPN) carry the Gly-Pro-Asn (GPN)-loop; involved in dimer interface motif. A GTP-binding site is contributed by 178–181 (SKMD).

This sequence belongs to the GPN-loop GTPase family. In terms of assembly, heterodimers with GPN1 or GPN3. Binds to RNA polymerase II (RNAPII).

In terms of biological role, small GTPase required for proper localization of RNA polymerase II and III (RNAPII and RNAPIII). May act at an RNAP assembly step prior to nuclear import. The sequence is that of GPN-loop GTPase 2 (GPN2) from Bos taurus (Bovine).